A 264-amino-acid polypeptide reads, in one-letter code: NAD kinase 1 (264 aa).

The active-site Proton acceptor is aspartate 45. NAD(+) contacts are provided by residues 45–46 (DG), 122–123 (NE), arginine 148, aspartate 150, 161–166 (TAYNKS), and alanine 185.

This sequence belongs to the NAD kinase family. Requires a divalent metal cation as cofactor.

It localises to the cytoplasm. It carries out the reaction NAD(+) + ATP = ADP + NADP(+) + H(+). Functionally, involved in the regulation of the intracellular balance of NAD and NADP, and is a key enzyme in the biosynthesis of NADP. Catalyzes specifically the phosphorylation on 2'-hydroxyl of the adenosine moiety of NAD to yield NADP. This Listeria innocua serovar 6a (strain ATCC BAA-680 / CLIP 11262) protein is NAD kinase 1.